Reading from the N-terminus, the 461-residue chain is Cysteine--tRNA ligase (461 aa).

C28 contributes to the Zn(2+) binding site. Residues 30-40 (ITVYDLCHIGH) carry the 'HIGH' region motif. 3 residues coordinate Zn(2+): C209, H234, and E238. Residues 266–270 (KMSKS) carry the 'KMSKS' region motif. K269 is a binding site for ATP.

It belongs to the class-I aminoacyl-tRNA synthetase family. In terms of assembly, monomer. Zn(2+) is required as a cofactor.

The protein localises to the cytoplasm. The catalysed reaction is tRNA(Cys) + L-cysteine + ATP = L-cysteinyl-tRNA(Cys) + AMP + diphosphate. In Escherichia coli (strain SMS-3-5 / SECEC), this protein is Cysteine--tRNA ligase.